Here is a 552-residue protein sequence, read N- to C-terminus: Threonylcarbamoyladenosine tRNA methylthiotransferase (552 aa).

The disordered stretch occupies residues 31 to 61 (YENKKTVTVRAKKRSQIRLESQEEEEKPKPT). One can recognise an MTTase N-terminal domain in the interval 71–178 (QKVFVKTWGC…VVEVVEETLK (108 aa)). [4Fe-4S] cluster contacts are provided by C80, C115, C144, C221, C225, and C228. The Radical SAM core domain occupies 207–438 (RKNPLIEIIS…DLFYSYEPYA (232 aa)). In terms of domain architecture, TRAM spans 438-500 (ADRVGEIYTV…KFSMVGEILD (63 aa)). Residues 532–552 (FGIALVLGSLAFLIQLVVRLL) traverse the membrane as a helical segment.

It belongs to the methylthiotransferase family. CDKAL1 subfamily. [4Fe-4S] cluster is required as a cofactor.

It is found in the membrane. It catalyses the reaction N(6)-L-threonylcarbamoyladenosine(37) in tRNA + (sulfur carrier)-SH + AH2 + 2 S-adenosyl-L-methionine = 2-methylsulfanyl-N(6)-L-threonylcarbamoyladenosine(37) in tRNA + (sulfur carrier)-H + 5'-deoxyadenosine + L-methionine + A + S-adenosyl-L-homocysteine + 2 H(+). Functionally, catalyzes the methylthiolation of N6-threonylcarbamoyladenosine (t(6)A), leading to the formation of 2-methylthio-N6-threonylcarbamoyladenosine (ms(2)t(6)A) at position 37 in tRNAs that read codons beginning with adenine. The sequence is that of Threonylcarbamoyladenosine tRNA methylthiotransferase from Drosophila melanogaster (Fruit fly).